Reading from the N-terminus, the 476-residue chain is Ribulose bisphosphate carboxylase large chain (476 aa).

Positions 124 and 174 each coordinate substrate. Catalysis depends on Lys-176, which acts as the Proton acceptor. Lys-178 lines the substrate pocket. Lys-202, Asp-204, and Glu-205 together coordinate Mg(2+). Lys-202 carries the N6-carboxylysine modification. The active-site Proton acceptor is His-295. Residues Arg-296, His-328, and Ser-380 each contribute to the substrate site.

This sequence belongs to the RuBisCO large chain family. Type I subfamily. As to quaternary structure, heterohexadecamer of 8 large chains and 8 small chains; disulfide-linked. The disulfide link is formed within the large subunit homodimers. Mg(2+) serves as cofactor. In terms of processing, the disulfide bond which can form in the large chain dimeric partners within the hexadecamer appears to be associated with oxidative stress and protein turnover.

The protein localises to the carboxysome. It carries out the reaction 2 (2R)-3-phosphoglycerate + 2 H(+) = D-ribulose 1,5-bisphosphate + CO2 + H2O. The enzyme catalyses D-ribulose 1,5-bisphosphate + O2 = 2-phosphoglycolate + (2R)-3-phosphoglycerate + 2 H(+). RuBisCO catalyzes two reactions: the carboxylation of D-ribulose 1,5-bisphosphate, the primary event in carbon dioxide fixation, as well as the oxidative fragmentation of the pentose substrate in the photorespiration process. Both reactions occur simultaneously and in competition at the same active site. The chain is Ribulose bisphosphate carboxylase large chain from Trichormus variabilis (strain ATCC 29413 / PCC 7937) (Anabaena variabilis).